We begin with the raw amino-acid sequence, 539 residues long: Inositol 1,4,5-trisphosphate receptor-interacting protein (539 aa).

Positions 1–24 are cleaved as a signal peptide; it reads MQGAIARVCMVVVAAILNHPLLFP. At 25-71 the chain is on the extracellular side; the sequence is NENTTVPEQDEDLLARMKEHQEKLEAEQKRLEQEISQNETSVIGDQD. 2 N-linked (GlcNAc...) asparagine glycosylation sites follow: asparagine 27 and asparagine 62. The stretch at 32 to 68 forms a coiled coil; sequence EQDEDLLARMKEHQEKLEAEQKRLEQEISQNETSVIG. The chain crosses the membrane as a helical span at residues 72–92; that stretch reads GYGWYFWSALCLVIFFTIEVC. At 93-539 the chain is on the cytoplasmic side; that stretch reads RQDLISAEIP…RHEFSSAEQI (447 aa).

Belongs to the ITPRIP family.

The protein localises to the cell membrane. It is found in the nucleus outer membrane. Functionally, enhances Ca(2+)-mediated inhibition of inositol 1,4,5-triphosphate receptor (ITPR) Ca(2+) release. The chain is Inositol 1,4,5-trisphosphate receptor-interacting protein (itprip) from Danio rerio (Zebrafish).